Consider the following 31-residue polypeptide: Cytochrome b6-f complex subunit 6 (31 aa).

A helical transmembrane segment spans residues Ile-3 to Leu-23.

This sequence belongs to the PetL family. In terms of assembly, the 4 large subunits of the cytochrome b6-f complex are cytochrome b6, subunit IV (17 kDa polypeptide, PetD), cytochrome f and the Rieske protein, while the 4 small subunits are PetG, PetL, PetM and PetN. The complex functions as a dimer.

It is found in the plastid. Its subcellular location is the chloroplast thylakoid membrane. In terms of biological role, component of the cytochrome b6-f complex, which mediates electron transfer between photosystem II (PSII) and photosystem I (PSI), cyclic electron flow around PSI, and state transitions. PetL is important for photoautotrophic growth as well as for electron transfer efficiency and stability of the cytochrome b6-f complex. The sequence is that of Cytochrome b6-f complex subunit 6 from Thalassiosira pseudonana (Marine diatom).